A 324-amino-acid polypeptide reads, in one-letter code: Protein translocase subunit SecF (324 aa).

Helical transmembrane passes span 16 to 36 (FFWA…ASLV), 145 to 165 (LIRS…VYIW), 174 to 194 (LGSV…FALF), 201 to 221 (TTVA…VVVF), 247 to 269 (TLSR…LVFG), and 276 to 295 (FVFA…VYMA).

It belongs to the SecD/SecF family. SecF subfamily. In terms of assembly, forms a complex with SecD. Part of the essential Sec protein translocation apparatus which comprises SecA, SecYEG and auxiliary proteins SecDF-YajC and YidC.

Its subcellular location is the cell inner membrane. Its function is as follows. Part of the Sec protein translocase complex. Interacts with the SecYEG preprotein conducting channel. SecDF uses the proton motive force (PMF) to complete protein translocation after the ATP-dependent function of SecA. The polypeptide is Protein translocase subunit SecF (Cereibacter sphaeroides (strain ATCC 17023 / DSM 158 / JCM 6121 / CCUG 31486 / LMG 2827 / NBRC 12203 / NCIMB 8253 / ATH 2.4.1.) (Rhodobacter sphaeroides)).